The following is a 258-amino-acid chain: Cytochrome P450 1A2 (258 aa).

Belongs to the cytochrome P450 family. Requires heme as cofactor.

It is found in the endoplasmic reticulum membrane. It localises to the microsome membrane. The enzyme catalyses an organic molecule + reduced [NADPH--hemoprotein reductase] + O2 = an alcohol + oxidized [NADPH--hemoprotein reductase] + H2O + H(+). Its function is as follows. Cytochromes P450 are a group of heme-thiolate monooxygenases. In liver microsomes, this enzyme is involved in an NADPH-dependent electron transport pathway. It oxidizes a variety of structurally unrelated compounds, including steroids, fatty acids, and xenobiotics. The polypeptide is Cytochrome P450 1A2 (CYP1A2) (Gallus gallus (Chicken)).